The primary structure comprises 228 residues: Response regulator MprA (228 aa).

In terms of domain architecture, Response regulatory spans 2–116; that stretch reads RILVVDDDRA…ELLARMRALL (115 aa). A 4-aspartylphosphate modification is found at Asp-46. Residues 127 to 225 constitute a DNA-binding region (ompR/PhoB-type); it reads SVAMTFSDLT…VRGVGYVLRE (99 aa).

In terms of processing, phosphorylated and dephosphorylated by MprB.

It localises to the cytoplasm. Its function is as follows. Member of the two-component regulatory system MprB/MprA which contributes to maintaining a balance among several systems involved in stress resistance and is required for establishment and maintenance of persistent infection in the host. Functions as a transcriptional regulator that recognizes a 19-bp nucleotide motif comprizing two loosely conserved 8-bp direct DNA-binding motif repeats separated by a 3-bp spacer region. The protein is Response regulator MprA (mprA) of Mycobacterium avium (strain 104).